We begin with the raw amino-acid sequence, 321 residues long: MTAHPEFAVIGAGAWGTALASLYAAQGRRVALVARDSTKAAALATTRTTPRLPGLRLPDSLAVTARPPEAPVTLLAVPFQHLRETLGRLPQGNGTLVLCAKGVERESGALGPEIAAEMEPRRPCAVLTGPNFAHEIAIGLPAAAVLAMTDDGARRDLVQHLATPRLRVYGSADPIGAALGGAAKNVIAIAAGAVIGAGLGENARAALITRGLAEIARLTEALGGAAETISGLAGLGDLILTATGSASRNYRAGLAFGQGKRPDTEAGVIEGIATAPALLARARATGCEMPVTEAVTDLLAGRITLEASMNRLLRRALRDER.

Residues W15, R35, and K101 each contribute to the NADPH site. K101 and G129 together coordinate sn-glycerol 3-phosphate. A133 provides a ligand contact to NADPH. The sn-glycerol 3-phosphate site is built by K184, D237, S247, R248, and N249. K184 serves as the catalytic Proton acceptor. R248 is an NADPH binding site. The NADPH site is built by V268 and E270.

Belongs to the NAD-dependent glycerol-3-phosphate dehydrogenase family.

It is found in the cytoplasm. It carries out the reaction sn-glycerol 3-phosphate + NAD(+) = dihydroxyacetone phosphate + NADH + H(+). The enzyme catalyses sn-glycerol 3-phosphate + NADP(+) = dihydroxyacetone phosphate + NADPH + H(+). It participates in membrane lipid metabolism; glycerophospholipid metabolism. In terms of biological role, catalyzes the reduction of the glycolytic intermediate dihydroxyacetone phosphate (DHAP) to sn-glycerol 3-phosphate (G3P), the key precursor for phospholipid synthesis. In Acidiphilium cryptum (strain JF-5), this protein is Glycerol-3-phosphate dehydrogenase [NAD(P)+].